The sequence spans 388 residues: MKWLLVALVCLHLLEAAVIKVPLRKFKSIRETLKEKGLLKEFLNTHKYDPALKYRFGDFSVTYEPMDYLDAAYFGEISIGTPSQNFLVLFDTGSSNLWVPSVYCQSEACTTHNRFNPSKSSTFYTYDQTFSLEYGSGSLTGFFGYDTFTIQNIEVPNQEFGLSETEPGTNFLYAEFDGIMGLAYPSLSVGDATPALQGMVQDGTISSSVFSFYLSSQQGTDGGALVLGGVDSSLYTGDIYWAPVTRELYWQIGIDEFLISSEASGWCSQGCQAIVDTGTSLLTVPQEYMSDLLEATGAQENEYGEFLVDCDSTESLPTFTFVINGVEFPLSPSAYILNTDGQCMVGVEATYLSSQDGEPLWILGDVFLRAYYSVFDMANNRVGFAALA.

The N-terminal stretch at 1-16 is a signal peptide; the sequence is MKWLLVALVCLHLLEA. Positions 17 to 59 are cleaved as a propeptide — activation peptide; it reads AVIKVPLRKFKSIRETLKEKGLLKEFLNTHKYDPALKYRFGDF. The Peptidase A1 domain occupies 73–385; the sequence is YFGEISIGTP…DMANNRVGFA (313 aa). Asp-91 is an active-site residue. 2 disulfide bridges follow: Cys-104-Cys-109 and Cys-267-Cys-271. Asp-276 is an active-site residue. Cys-310 and Cys-343 form a disulfide bridge.

Belongs to the peptidase A1 family.

It is found in the secreted. It carries out the reaction More restricted specificity than pepsin A, but shows preferential cleavage at Tyr-|-Xaa bonds. High activity on hemoglobin.. Hydrolyzes a variety of proteins. The polypeptide is Gastricsin (PGC) (Oryctolagus cuniculus (Rabbit)).